Here is a 77-residue protein sequence, read N- to C-terminus: Apelin (77 aa).

The N-terminal stretch at 1-22 (MNVKILTLVIVLVVSLLCSASA) is a signal peptide. A disordered region spans residues 21-77 (SAGPMASTEHSKEIEEVGSMRTPLRQNPARAGRSQRPAGWRRRRPRPRLSHKGPMPF). Residues 59–71 (GWRRRRPRPRLSH) show a composition bias toward basic residues.

It belongs to the apelin family.

It localises to the secreted. The protein resides in the extracellular space. In terms of biological role, peptide hormone that functions as endogenous ligand for the G-protein-coupled apelin receptor (aplnra and/or aplnrb), that plays a role in cadiovascular homeostasis. Functions as a balanced agonist activating both G(i) protein pathway and beta-arrestin pathway of APLNR. Downstream G proteins activation, apelin can inhibit cAMP production and activate key intracellular effectors such as ERKs. On the other hand, APLNR activation induces beta-arrestin recruitment to the membrane leading to desensitization and internalization of the receptor. Apelin blunts cardiac hypertrophic induction from APLNR on response to pathological stimuli, but also induces myocardial hypertrophy under normal conditions. Involved in the regulation of cardiac precursor cell movements during gastrulation and heart morphogenesis. Plays a role in early coronary blood vessels formation. Mediates myocardial contractility in an ERK1/2-dependent manner. May also have a role in the central control of body fluid homeostasis. This chain is Apelin, found in Danio rerio (Zebrafish).